Consider the following 561-residue polypeptide: Carbohydrate sulfotransferase 15 (561 aa).

Over 1 to 80 (MRHCINCCVQ…FLRFRKGKRC (80 aa)) the chain is Cytoplasmic. A helical; Signal-anchor for type II membrane protein membrane pass occupies residues 81–101 (SLVFGLIIMTLVMASYILSGA). Over 102–561 (HQELLISSPF…DDEAFAWKTT (460 aa)) the chain is Lumenal. 263-267 (KCGTT) serves as a coordination point for 3'-phosphoadenylyl sulfate. Asn364 is a glycosylation site (N-linked (GlcNAc...) asparagine). The 3'-phosphoadenylyl sulfate site is built by Arg392 and Ser400.

It belongs to the sulfotransferase 1 family. Homodimer; disulfide-linked (Potential). The relevance of homodimerization is however unsure. May interact with phosphorylated proteins in resting B-cells, including HCK. The cofactor is a divalent metal cation. Glutathione is required as a cofactor. Glycosylated.

It localises to the golgi apparatus membrane. The enzyme catalyses dermatan 4'-sulfate + n 3'-phosphoadenylyl sulfate = dermatan 4',6'-bissulfate + n adenosine 3',5'-bisphosphate + n H(+). The catalysed reaction is chondroitin 4'-sulfate + n 3'-phosphoadenylyl sulfate = chondroitin 4',6'-bissulfate + n adenosine 3',5'-bisphosphate + n H(+). With respect to regulation, inhibited by phenyl beta-GalNAc(4,6-SO(4)). In terms of biological role, sulfotransferase that transfers sulfate from 3'-phosphoadenosine 5'-phosphosulfate (PAPS) to the C-6 hydroxyl group of the GalNAc 4-sulfate residue of chondroitin sulfate A and forms chondroitin sulfate E containing GlcA-GalNAc(4,6-SO(4)) repeating units. It also transfers sulfate to a unique non-reducing terminal sequence, GalNAc(4SO4)-GlcA(2SO4)-GalNAc(6SO4), to yield a highly sulfated structure similar to the structure found in thrombomodulin chondroitin sulfate. May also act as a B-cell receptor involved in BCR ligation-mediated early activation that mediate regulatory signals key to B-cell development and/or regulation of B-cell-specific RAG expression; however such results are unclear in vivo. This is Carbohydrate sulfotransferase 15 (Chst15) from Mus musculus (Mouse).